Reading from the N-terminus, the 280-residue chain is Putative pyruvate, phosphate dikinase regulatory protein (280 aa).

147–154 is an ADP binding site; it reads GASRSSKT.

The protein belongs to the pyruvate, phosphate/water dikinase regulatory protein family. PDRP subfamily.

The catalysed reaction is N(tele)-phospho-L-histidyl/L-threonyl-[pyruvate, phosphate dikinase] + ADP = N(tele)-phospho-L-histidyl/O-phospho-L-threonyl-[pyruvate, phosphate dikinase] + AMP + H(+). It carries out the reaction N(tele)-phospho-L-histidyl/O-phospho-L-threonyl-[pyruvate, phosphate dikinase] + phosphate + H(+) = N(tele)-phospho-L-histidyl/L-threonyl-[pyruvate, phosphate dikinase] + diphosphate. Functionally, bifunctional serine/threonine kinase and phosphorylase involved in the regulation of the pyruvate, phosphate dikinase (PPDK) by catalyzing its phosphorylation/dephosphorylation. This is Putative pyruvate, phosphate dikinase regulatory protein from Pelobacter propionicus (strain DSM 2379 / NBRC 103807 / OttBd1).